We begin with the raw amino-acid sequence, 434 residues long: MSFNTIIDWNSCTAEQQRQLLMRPAISASESITRTVNDILDNVKTRGDEALREYSAKFDKTTVTALKVSADEIAAASERLSDELKQAMAVAVKSIETFHTAQKLPPVDVETQLGVRCQQVTRPVASVGLYIPGGSAPLFSTVLMLATPARIAGCKKVVLCSPPPIADEILYAAQLCDVQDVFNVGGAQAIAALAFGTESVPKVDKIFGPGNAFVTEAKRQVSQRLDGAAIDMPAGPSEVLVIADSGATPDFVASDLLSQAEHGPDSQVILLTPDADMARRVAEAVERQLAELPRAETTRQALNASRLIVTKDLAQCVEISNQYGPEHLIIQTRNARELVDGITSAGSVFLGDWSPESAGDYASGTNHVLPTYGYTATCSSLGLADFQKRMTVQELSKEGFSALASTIETLAAAERLTAHKNAVTLRVNVLKEQA.

Residues tyrosine 130, glutamine 188, and asparagine 211 each contribute to the NAD(+) site. Substrate-binding residues include serine 237, glutamine 259, and histidine 262. Residues glutamine 259 and histidine 262 each contribute to the Zn(2+) site. Catalysis depends on proton acceptor residues glutamate 326 and histidine 327. Substrate is bound by residues histidine 327, aspartate 360, glutamate 414, and histidine 419. Zn(2+) is bound at residue aspartate 360. Histidine 419 serves as a coordination point for Zn(2+).

This sequence belongs to the histidinol dehydrogenase family. In terms of assembly, homodimer. Zn(2+) serves as cofactor.

It carries out the reaction L-histidinol + 2 NAD(+) + H2O = L-histidine + 2 NADH + 3 H(+). It functions in the pathway amino-acid biosynthesis; L-histidine biosynthesis; L-histidine from 5-phospho-alpha-D-ribose 1-diphosphate: step 9/9. In terms of biological role, catalyzes the sequential NAD-dependent oxidations of L-histidinol to L-histidinaldehyde and then to L-histidine. This Shigella flexneri protein is Histidinol dehydrogenase.